The primary structure comprises 786 residues: Aculeacin-A acylase (786 aa).

A signal peptide spans 1 to 22 (MTSSYMRLKAAAIAFGVIVATA). The propeptide occupies 23 to 34 (AVPSPASGREHD). The interval 35–130 (GGYAALIRRA…PRDGVRAPCD (96 aa)) is substrate-binding. A propeptide spans 215–229 (AAIAAALDGTSAGIG) (spacer peptide). The segment at 220 to 239 (ALDGTSAGIGSNAYGLGAQA) is possible recognition-sequence of an AAC processing enzyme. Serine 230 serves as the catalytic Nucleophile. Positions 658–689 (ACNGSPASPSTRSVGDIHTDSRGERRIPIHGG) are disordered. Positions 672–684 (GDIHTDSRGERRI) are enriched in basic and acidic residues.

This sequence belongs to the peptidase S45 family. Heterodimer of a small subunit and a large subunit processed from the same precursor.

The protein resides in the secreted. Catalyzes the hydrolysis of the palmitoyl moiety of the antifungal antibiotic, aculeacin-A, giving a hexapeptide moiety and a long chain fatty acid. In Actinoplanes utahensis, this protein is Aculeacin-A acylase (aac).